The primary structure comprises 259 residues: Thiazole synthase (259 aa).

Lys99 acts as the Schiff-base intermediate with DXP in catalysis. Residues Gly161, 187–188 (AG), and 209–219 (NSAIACAQNPI) contribute to the 1-deoxy-D-xylulose 5-phosphate site.

Belongs to the ThiG family. Homotetramer. Forms heterodimers with either ThiH or ThiS.

The protein localises to the cytoplasm. It carries out the reaction [ThiS sulfur-carrier protein]-C-terminal-Gly-aminoethanethioate + 2-iminoacetate + 1-deoxy-D-xylulose 5-phosphate = [ThiS sulfur-carrier protein]-C-terminal Gly-Gly + 2-[(2R,5Z)-2-carboxy-4-methylthiazol-5(2H)-ylidene]ethyl phosphate + 2 H2O + H(+). It participates in cofactor biosynthesis; thiamine diphosphate biosynthesis. Catalyzes the rearrangement of 1-deoxy-D-xylulose 5-phosphate (DXP) to produce the thiazole phosphate moiety of thiamine. Sulfur is provided by the thiocarboxylate moiety of the carrier protein ThiS. In vitro, sulfur can be provided by H(2)S. The chain is Thiazole synthase from Aliarcobacter butzleri (strain RM4018) (Arcobacter butzleri).